We begin with the raw amino-acid sequence, 179 residues long: ATP synthase subunit delta (179 aa).

This sequence belongs to the ATPase delta chain family. In terms of assembly, F-type ATPases have 2 components, F(1) - the catalytic core - and F(0) - the membrane proton channel. F(1) has five subunits: alpha(3), beta(3), gamma(1), delta(1), epsilon(1). F(0) has three main subunits: a(1), b(2) and c(10-14). The alpha and beta chains form an alternating ring which encloses part of the gamma chain. F(1) is attached to F(0) by a central stalk formed by the gamma and epsilon chains, while a peripheral stalk is formed by the delta and b chains.

Its subcellular location is the cell inner membrane. Its function is as follows. F(1)F(0) ATP synthase produces ATP from ADP in the presence of a proton or sodium gradient. F-type ATPases consist of two structural domains, F(1) containing the extramembraneous catalytic core and F(0) containing the membrane proton channel, linked together by a central stalk and a peripheral stalk. During catalysis, ATP synthesis in the catalytic domain of F(1) is coupled via a rotary mechanism of the central stalk subunits to proton translocation. Functionally, this protein is part of the stalk that links CF(0) to CF(1). It either transmits conformational changes from CF(0) to CF(1) or is implicated in proton conduction. The polypeptide is ATP synthase subunit delta (Anaeromyxobacter sp. (strain Fw109-5)).